Consider the following 397-residue polypeptide: Chorismate synthase (397 aa).

The NADP(+) site is built by Arg-40 and Arg-46. FMN is bound by residues 129–131 (RSS), 257–258 (QA), Gly-302, 317–321 (KPISS), and Arg-343.

The protein belongs to the chorismate synthase family. As to quaternary structure, homotetramer. FMNH2 is required as a cofactor.

It catalyses the reaction 5-O-(1-carboxyvinyl)-3-phosphoshikimate = chorismate + phosphate. It functions in the pathway metabolic intermediate biosynthesis; chorismate biosynthesis; chorismate from D-erythrose 4-phosphate and phosphoenolpyruvate: step 7/7. Its function is as follows. Catalyzes the anti-1,4-elimination of the C-3 phosphate and the C-6 proR hydrogen from 5-enolpyruvylshikimate-3-phosphate (EPSP) to yield chorismate, which is the branch point compound that serves as the starting substrate for the three terminal pathways of aromatic amino acid biosynthesis. This reaction introduces a second double bond into the aromatic ring system. The chain is Chorismate synthase from Chlorobium limicola (strain DSM 245 / NBRC 103803 / 6330).